A 264-amino-acid polypeptide reads, in one-letter code: Cercarial protease (264 aa).

A signal peptide spans 1–19 (MSNRWRFVVVVTLFTYCLT). Positions 20–27 (FERVSTWL) are excised as a propeptide. Residues 28 to 264 (IRSGEPVQHP…RMLDFVRSNI (237 aa)) form the Peptidase S1 domain. Cys-53 and Cys-69 are oxidised to a cystine. Active-site charge relay system residues include His-68 and Asp-126. Cys-192 and Cys-202 are joined by a disulfide. The active-site Charge relay system is Ser-218.

The protein belongs to the peptidase S1 family. In terms of tissue distribution, acetabular (penetration) glands.

With respect to regulation, activated by an autocatalytic mechanism. Functionally, this protease cleaves elastin and thus facilitates penetration of schistosome parasite larvae through elastin-rich tissue of the host. This chain is Cercarial protease, found in Schistosoma mansoni (Blood fluke).